The primary structure comprises 97 residues: Small ribosomal subunit protein bS6 (97 aa).

This sequence belongs to the bacterial ribosomal protein bS6 family.

Functionally, binds together with bS18 to 16S ribosomal RNA. The polypeptide is Small ribosomal subunit protein bS6 (Dictyoglomus turgidum (strain DSM 6724 / Z-1310)).